A 176-amino-acid polypeptide reads, in one-letter code: NAD(P)H-quinone oxidoreductase subunit I, chloroplastic (176 aa).

4Fe-4S ferredoxin-type domains are found at residues 55–84 and 95–124; these read GRIH…VDWE and LNYS…MTEE. The [4Fe-4S] cluster site is built by cysteine 64, cysteine 67, cysteine 70, cysteine 74, cysteine 104, cysteine 107, cysteine 110, and cysteine 114.

The protein belongs to the complex I 23 kDa subunit family. In terms of assembly, NDH is composed of at least 16 different subunits, 5 of which are encoded in the nucleus. [4Fe-4S] cluster is required as a cofactor.

Its subcellular location is the plastid. It localises to the chloroplast thylakoid membrane. The catalysed reaction is a plastoquinone + NADH + (n+1) H(+)(in) = a plastoquinol + NAD(+) + n H(+)(out). It carries out the reaction a plastoquinone + NADPH + (n+1) H(+)(in) = a plastoquinol + NADP(+) + n H(+)(out). NDH shuttles electrons from NAD(P)H:plastoquinone, via FMN and iron-sulfur (Fe-S) centers, to quinones in the photosynthetic chain and possibly in a chloroplast respiratory chain. The immediate electron acceptor for the enzyme in this species is believed to be plastoquinone. Couples the redox reaction to proton translocation, and thus conserves the redox energy in a proton gradient. In Populus alba (White poplar), this protein is NAD(P)H-quinone oxidoreductase subunit I, chloroplastic.